A 237-amino-acid chain; its full sequence is Pyridoxal phosphate homeostasis protein (237 aa).

N6-(pyridoxal phosphate)lysine is present on K35.

This sequence belongs to the pyridoxal phosphate-binding protein YggS/PROSC family.

In terms of biological role, pyridoxal 5'-phosphate (PLP)-binding protein, which is involved in PLP homeostasis. In Haemophilus influenzae (strain ATCC 51907 / DSM 11121 / KW20 / Rd), this protein is Pyridoxal phosphate homeostasis protein.